Here is a 309-residue protein sequence, read N- to C-terminus: MGINFDVSRPKARSSINMTTKFHTIGLIGKPHHPGTNQTLKRLHHWLTVQGYEVLVEERVASELGTHIVAVDLLEIGARCDLAIVVGGDGNMLGAARVLARFDVGVIGVNRGNLGFLTDLPPDAFEEALAKVLDGEFDTEHRFLLEAEVYRHGMLKASNTAVNEAVLHPGKIAHMIEFEVYIDNQFMYSQRADGMIVSTPTGSTAYALSAGGAILTPNLQALILVPMFPHTLSCRPIVVDACSTIKMVVSPENGENLEVSCDGHVHLAVLPGDEIIVRRSSEQLRLIHPKGHNYFHVLRSKLGWGSKLF.

Asp89 functions as the Proton acceptor in the catalytic mechanism. NAD(+) is bound by residues 89 to 90 (DG), 163 to 164 (NE), His174, Arg191, Asp193, and 204 to 209 (TAYALS).

This sequence belongs to the NAD kinase family. The cofactor is a divalent metal cation.

The protein localises to the cytoplasm. The enzyme catalyses NAD(+) + ATP = ADP + NADP(+) + H(+). Functionally, involved in the regulation of the intracellular balance of NAD and NADP, and is a key enzyme in the biosynthesis of NADP. Catalyzes specifically the phosphorylation on 2'-hydroxyl of the adenosine moiety of NAD to yield NADP. In Shewanella sp. (strain MR-4), this protein is NAD kinase.